A 244-amino-acid polypeptide reads, in one-letter code: Cobalt transport protein CbiM (244 aa).

The N-terminal stretch at 1 to 28 (MKKLWKFIPFVLMGVIYFTLTNPESAHA) is a signal peptide. 6 helical membrane passes run 37–57 (PVKW…LGLI), 71–91 (LLLA…IPSV), 103–123 (LATV…VLLF), 135–155 (TLGA…FVVY), 166–186 (SVSI…TTSV), and 206–226 (FMAI…LLTV).

Belongs to the CbiM family. As to quaternary structure, forms an energy-coupling factor (ECF) transporter complex composed of an ATP-binding protein (A component, CbiO), a transmembrane protein (T component, CbiQ) and 2 possible substrate-capture proteins (S components, CbiM and CbiN) of unknown stoichimetry.

Its subcellular location is the cell membrane. Its pathway is cofactor biosynthesis; adenosylcobalamin biosynthesis. Its function is as follows. Part of the energy-coupling factor (ECF) transporter complex CbiMNOQ involved in cobalt import. The sequence is that of Cobalt transport protein CbiM from Listeria seeligeri serovar 1/2b (strain ATCC 35967 / DSM 20751 / CCM 3970 / CCUG 15530 / CIP 100100 / LMG 11386 / NCTC 11856 / SLCC 3954 / 1120).